Reading from the N-terminus, the 289-residue chain is Agamous-like MADS-box protein AGL93 (289 aa).

The MADS-box domain occupies 18–78 (QTCFKKSSLS…GKLIKTWPDD (61 aa)). The disordered stretch occupies residues 151 to 197 (EFGQTRAVSSTTNPLSPPPSLIEDHRHQQRTEPLMSGVSNTEQDLST). A compositionally biased stretch (polar residues) spans 187–197 (GVSNTEQDLST).

Expressed in pollen.

It localises to the nucleus. In terms of biological role, probable transcription factor. The chain is Agamous-like MADS-box protein AGL93 from Arabidopsis thaliana (Mouse-ear cress).